The following is a 147-amino-acid chain: Acireductone dioxygenase (147 aa).

The Fe(2+) site is built by histidine 74, histidine 76, glutamate 80, and histidine 119. 4 residues coordinate Ni(2+): histidine 74, histidine 76, glutamate 80, and histidine 119.

Belongs to the acireductone dioxygenase (ARD) family. Fe(2+) is required as a cofactor. It depends on Ni(2+) as a cofactor.

The protein localises to the cytoplasm. Its subcellular location is the nucleus. It carries out the reaction 1,2-dihydroxy-5-(methylsulfanyl)pent-1-en-3-one + O2 = 4-methylsulfanyl-2-oxobutanoate + formate + 2 H(+). The catalysed reaction is 1,2-dihydroxy-5-(methylsulfanyl)pent-1-en-3-one + O2 = 3-(methylsulfanyl)propanoate + CO + formate + 2 H(+). Its pathway is amino-acid biosynthesis; L-methionine biosynthesis via salvage pathway; L-methionine from S-methyl-5-thio-alpha-D-ribose 1-phosphate: step 5/6. Its function is as follows. Catalyzes 2 different reactions between oxygen and the acireductone 1,2-dihydroxy-3-keto-5-methylthiopentene (DHK-MTPene) depending upon the metal bound in the active site. Fe-containing acireductone dioxygenase (Fe-ARD) produces formate and 2-keto-4-methylthiobutyrate (KMTB), the alpha-ketoacid precursor of methionine in the methionine recycle pathway. Ni-containing acireductone dioxygenase (Ni-ARD) produces methylthiopropionate, carbon monoxide and formate, and does not lie on the methionine recycle pathway. This is Acireductone dioxygenase (adi1) from Dictyostelium discoideum (Social amoeba).